Reading from the N-terminus, the 213-residue chain is Orotate phosphoribosyltransferase (213 aa).

Lys-26 is a 5-phospho-alpha-D-ribose 1-diphosphate binding site. 34-35 (FF) lines the orotate pocket. 5-phospho-alpha-D-ribose 1-diphosphate contacts are provided by residues 72 to 73 (YK), Arg-99, Lys-100, Lys-103, His-105, and 124 to 132 (DDVITAGTA). Orotate is bound by residues Thr-128 and Arg-156.

The protein belongs to the purine/pyrimidine phosphoribosyltransferase family. PyrE subfamily. Homodimer. The cofactor is Mg(2+).

It catalyses the reaction orotidine 5'-phosphate + diphosphate = orotate + 5-phospho-alpha-D-ribose 1-diphosphate. It participates in pyrimidine metabolism; UMP biosynthesis via de novo pathway; UMP from orotate: step 1/2. In terms of biological role, catalyzes the transfer of a ribosyl phosphate group from 5-phosphoribose 1-diphosphate to orotate, leading to the formation of orotidine monophosphate (OMP). In Enterobacter sp. (strain 638), this protein is Orotate phosphoribosyltransferase.